Reading from the N-terminus, the 337-residue chain is Ribosomal RNA small subunit methyltransferase H (337 aa).

Residues 35-37, Asp54, Phe81, Asp102, and Gln109 contribute to the S-adenosyl-L-methionine site; that span reads GGY. The segment at 286–316 is disordered; the sequence is PVGPSEAEAAANPRARSAKLRAGERTDAPAP. Positions 289-300 are enriched in low complexity; it reads PSEAEAAANPRA.

This sequence belongs to the methyltransferase superfamily. RsmH family.

It localises to the cytoplasm. The catalysed reaction is cytidine(1402) in 16S rRNA + S-adenosyl-L-methionine = N(4)-methylcytidine(1402) in 16S rRNA + S-adenosyl-L-homocysteine + H(+). Functionally, specifically methylates the N4 position of cytidine in position 1402 (C1402) of 16S rRNA. In Methylobacterium sp. (strain 4-46), this protein is Ribosomal RNA small subunit methyltransferase H.